A 328-amino-acid polypeptide reads, in one-letter code: Cytosolic Fe-S cluster assembly factor NBP35 (328 aa).

Residues Cys-27, Cys-41, Cys-44, and Cys-50 each contribute to the [4Fe-4S] cluster site. 80–87 is an ATP binding site; it reads GKGGVGKS. Residues Cys-253 and Cys-256 each contribute to the [4Fe-4S] cluster site.

Belongs to the Mrp/NBP35 ATP-binding proteins family. NUBP1/NBP35 subfamily. In terms of assembly, heterotetramer of 2 NBP35 and 2 CFD1 chains. [4Fe-4S] cluster is required as a cofactor.

The protein localises to the cytoplasm. It is found in the nucleus. In terms of biological role, component of the cytosolic iron-sulfur (Fe/S) protein assembly (CIA) machinery. Required for maturation of extramitochondrial Fe-S proteins. The NBP35-CFD1 heterotetramer forms a Fe-S scaffold complex, mediating the de novo assembly of an Fe-S cluster and its transfer to target apoproteins. Required for biogenesis and export of both ribosomal subunits, which may reflect a role in assembly of the Fe/S clusters in RLI1, a protein which performs rRNA processing and ribosome export. The sequence is that of Cytosolic Fe-S cluster assembly factor NBP35 from Saccharomyces cerevisiae (strain ATCC 204508 / S288c) (Baker's yeast).